The sequence spans 288 residues: Signal recognition particle receptor FtsY (288 aa).

Residues 93 to 100 (GINGTGKT), 175 to 179 (DTAGR), and 233 to 236 (TKLD) each bind GTP.

Belongs to the GTP-binding SRP family. FtsY subfamily. Part of the signal recognition particle protein translocation system, which is composed of SRP and FtsY.

The protein resides in the cell membrane. The protein localises to the cytoplasm. It catalyses the reaction GTP + H2O = GDP + phosphate + H(+). In terms of biological role, involved in targeting and insertion of nascent membrane proteins into the cytoplasmic membrane. Acts as a receptor for the complex formed by the signal recognition particle (SRP) and the ribosome-nascent chain (RNC). The chain is Signal recognition particle receptor FtsY from Thermoplasma acidophilum (strain ATCC 25905 / DSM 1728 / JCM 9062 / NBRC 15155 / AMRC-C165).